A 453-amino-acid polypeptide reads, in one-letter code: Signal recognition particle protein (453 aa).

GTP is bound by residues 107–114, 190–194, and 248–251; these read GLQGAGKT, DTAGR, and TKVD.

Belongs to the GTP-binding SRP family. SRP54 subfamily. Part of the signal recognition particle protein translocation system, which is composed of SRP and FtsY. SRP is a ribonucleoprotein composed of Ffh and a 4.5S RNA molecule.

It localises to the cytoplasm. The catalysed reaction is GTP + H2O = GDP + phosphate + H(+). Involved in targeting and insertion of nascent membrane proteins into the cytoplasmic membrane. Binds to the hydrophobic signal sequence of the ribosome-nascent chain (RNC) as it emerges from the ribosomes. The SRP-RNC complex is then targeted to the cytoplasmic membrane where it interacts with the SRP receptor FtsY. Interaction with FtsY leads to the transfer of the RNC complex to the Sec translocase for insertion into the membrane, the hydrolysis of GTP by both Ffh and FtsY, and the dissociation of the SRP-FtsY complex into the individual components. In Escherichia coli O157:H7, this protein is Signal recognition particle protein.